A 186-amino-acid polypeptide reads, in one-letter code: ATP synthase subunit delta (186 aa).

Belongs to the ATPase delta chain family. As to quaternary structure, F-type ATPases have 2 components, F(1) - the catalytic core - and F(0) - the membrane proton channel. F(1) has five subunits: alpha(3), beta(3), gamma(1), delta(1), epsilon(1). CF(0) has four main subunits: a(1), b(1), b'(1) and c(10-14). The alpha and beta chains form an alternating ring which encloses part of the gamma chain. F(1) is attached to F(0) by a central stalk formed by the gamma and epsilon chains, while a peripheral stalk is formed by the delta, b and b' chains.

The protein localises to the cell inner membrane. F(1)F(0) ATP synthase produces ATP from ADP in the presence of a proton or sodium gradient. F-type ATPases consist of two structural domains, F(1) containing the extramembraneous catalytic core and F(0) containing the membrane proton channel, linked together by a central stalk and a peripheral stalk. During catalysis, ATP synthesis in the catalytic domain of F(1) is coupled via a rotary mechanism of the central stalk subunits to proton translocation. In terms of biological role, this protein is part of the stalk that links CF(0) to CF(1). It either transmits conformational changes from CF(0) to CF(1) or is implicated in proton conduction. In Rhodospirillum centenum (strain ATCC 51521 / SW), this protein is ATP synthase subunit delta.